We begin with the raw amino-acid sequence, 346 residues long: Cobalt transport protein CbiM (346 aa).

Residues 1 to 25 (MKRITLYAAGSAIIGAMLLAGPAHA) form the signal peptide. Transmembrane regions (helical) follow at residues 31-51 (GILPLGWAALWFAVAAPFLAL), 68-88 (PLVGLMAAVVFIISCMPIPVP), 101-121 (IAAILVGPLVSVVITTVALLI), 133-153 (TLGADVVSMGVAGSFAGWFVF), 159-179 (LGAGLAVAAFVAGLLADWATY), 196-216 (FYPLFLKIVAAFVPTQLPLGV), 255-275 (ATVVMLALFCLLASLLVAGPS), and 312-332 (LLLFVFLLAGTVGGFAAGYFW).

The protein belongs to the CbiM family. In terms of assembly, forms an energy-coupling factor (ECF) transporter complex composed of an ATP-binding protein (A component, CbiO), a transmembrane protein (T component, CbiQ) and 2 possible substrate-capture proteins (S components, CbiM and CbiN) of unknown stoichimetry.

It is found in the cell inner membrane. Its pathway is cofactor biosynthesis; adenosylcobalamin biosynthesis. Its function is as follows. Part of the energy-coupling factor (ECF) transporter complex CbiMNOQ involved in cobalt import. This chain is Cobalt transport protein CbiM, found in Geobacter sulfurreducens (strain ATCC 51573 / DSM 12127 / PCA).